Here is a 418-residue protein sequence, read N- to C-terminus: UPF0261 protein BRA1168/BS1330_II1159 (418 aa).

The protein belongs to the UPF0261 family.

In Brucella suis biovar 1 (strain 1330), this protein is UPF0261 protein BRA1168/BS1330_II1159.